Consider the following 621-residue polypeptide: Leucine aminopeptidase (621 aa).

A propeptide spanning residues 1 to 73 is cleaved from the precursor; that stretch reads MPLLRSSQHI…ISNRKEFRKM (73 aa). The tract at residues 129–152 is disordered; the sequence is SSSGGSGGNGGSAGSSGNGEGGAQ. Positions 132-150 are enriched in gly residues; that stretch reads GGSGGNGGSAGSSGNGEGG. Residues Lys-390, Asp-395, and Lys-402 each contribute to the a peptide site. Zn(2+) contacts are provided by Lys-390 and Asp-395. Residues 400 to 417 are L13 loop; it reads NLKAAPGSMIDLMKFDMS. The active site involves Lys-402. Zn(2+) contacts are provided by Asp-410, Met-412, Asp-415, Asp-475, and Glu-477. A peptide is bound by residues Asp-415 and Asp-475. The active site involves Arg-479.

Belongs to the peptidase M17 family. As to quaternary structure, homohexamer composed of dimer of trimers. Both the identity and concentration of metal ions available dictate the extent to which oligomerization occurs; Mn(2+) and Co(2+) induces oligomerization, whereas Mg(2+) has no effect, and Zn(2+) causes irreversible protein aggregation in vitro. The cofactor is Zn(2+).

The protein localises to the cytoplasm. The enzyme catalyses Release of an N-terminal amino acid, Xaa-|-Yaa-, in which Xaa is preferably Leu, but may be other amino acids including Pro although not Arg or Lys, and Yaa may be Pro. Amino acid amides and methyl esters are also readily hydrolyzed, but rates on arylamides are exceedingly low.. The catalysed reaction is L-cysteinylglycine + H2O = L-cysteine + glycine. With respect to regulation, oligomerization is required for catalytic activity and is metal-dependent. The type of metal that binds the 2 metal binding sites influences catalytic activity and substrate specificity. In vitro, activated by Co(2+), Mn(2+), Ni(2+), Mg(2+) and Zn(2+) with decreasing strength. Occupancy of the site 2 is essential and sufficient for activating the enzyme but occupation of the 2 sites is necessary for full catalytic activity. Inhibited by Ca(2+). Inhibited by fungal metabolite bestatin. Functionally, aminopeptidase which preferentially cleaves leucine residues from the N-terminus of peptides. Also, has some activity towards tryptophan and methionine and has very low activity towards alanine, arginine, asparagine, phenylalanine and tyrosine. No activity towards histidine, serine, valine, isoleucine, glycine, aspartic acid and glutamic acid. In addition, cleaves the Cys-Gly dipeptide, probably as part of the glutathione regulation pathway; cleavage only occurs in the presence of Mn(2+). Plays a role in the final step of host hemoglobin catabolism, by cleaving hemoglobin-derived oligopeptides providing a source of amino acids for the parasite protein synthesis and for the maintenance of osmotic homeostasis. This Plasmodium vivax (strain Salvador I) protein is Leucine aminopeptidase.